The chain runs to 531 residues: 2,3-bisphosphoglycerate-independent phosphoglycerate mutase (531 aa).

Mn(2+) is bound by residues Asp13 and Ser63. Ser63 acts as the Phosphoserine intermediate in catalysis. Substrate-binding positions include His124, 154-155 (RD), Arg187, Arg193, 261-264 (RPDR), and Lys342. Mn(2+) contacts are provided by Asp420, His424, Asp462, His463, and His480.

This sequence belongs to the BPG-independent phosphoglycerate mutase family. As to quaternary structure, monomer. It depends on Mn(2+) as a cofactor.

It catalyses the reaction (2R)-2-phosphoglycerate = (2R)-3-phosphoglycerate. It participates in carbohydrate degradation; glycolysis; pyruvate from D-glyceraldehyde 3-phosphate: step 3/5. Functionally, catalyzes the interconversion of 2-phosphoglycerate and 3-phosphoglycerate. The polypeptide is 2,3-bisphosphoglycerate-independent phosphoglycerate mutase (Mycoplasma mycoides subsp. mycoides SC (strain CCUG 32753 / NCTC 10114 / PG1)).